The chain runs to 469 residues: DNA (cytosine-5-)-methyltransferase M.ApeKI (469 aa).

An SAM-dependent MTase C5-type domain is found at 4–469; it reads YSTISLFSGA…EALAEVLDAV (466 aa). Residue C93 is part of the active site.

This sequence belongs to the class I-like SAM-binding methyltransferase superfamily. C5-methyltransferase family.

The catalysed reaction is a 2'-deoxycytidine in DNA + S-adenosyl-L-methionine = a 5-methyl-2'-deoxycytidine in DNA + S-adenosyl-L-homocysteine + H(+). Its function is as follows. Cytosine methylase that recognizes the double-stranded sequence 5'-GC(A/T)GC-3', methylates C-5 position of the second cytosine on both strands, and protects the DNA from cleavage by the ApeKI endonuclease. The polypeptide is DNA (cytosine-5-)-methyltransferase M.ApeKI (Aeropyrum pernix (strain ATCC 700893 / DSM 11879 / JCM 9820 / NBRC 100138 / K1)).